Consider the following 456-residue polypeptide: O-phospho-L-seryl-tRNA:Cys-tRNA synthase 2 (456 aa).

Pyridoxal 5'-phosphate contacts are provided by residues 146 to 147 (AR), Asn251, and 274 to 276 (SGH). At Lys277 the chain carries N6-(pyridoxal phosphate)lysine.

Belongs to the SepCysS family. In terms of assembly, homodimer. Interacts with SepRS. It depends on pyridoxal 5'-phosphate as a cofactor.

The enzyme catalyses O-phospho-L-seryl-tRNA(Cys) + hydrogen sulfide + H(+) = L-cysteinyl-tRNA(Cys) + phosphate. Its function is as follows. Converts O-phospho-L-seryl-tRNA(Cys) (Sep-tRNA(Cys)) to L-cysteinyl-tRNA(Cys) (Cys-tRNA(Cys)). The sequence is that of O-phospho-L-seryl-tRNA:Cys-tRNA synthase 2 from Methanospirillum hungatei JF-1 (strain ATCC 27890 / DSM 864 / NBRC 100397 / JF-1).